Consider the following 172-residue polypeptide: Cell division protein SepF (172 aa).

The interval R18–L73 is disordered. Residues E22 to Y40 show a composition bias toward acidic residues. Residues Q48–A59 show a composition bias toward basic and acidic residues. A compositionally biased stretch (basic residues) spans R60–R70.

Belongs to the SepF family. In terms of assembly, homodimer. Interacts with FtsZ.

It is found in the cytoplasm. In terms of biological role, cell division protein that is part of the divisome complex and is recruited early to the Z-ring. Probably stimulates Z-ring formation, perhaps through the cross-linking of FtsZ protofilaments. Its function overlaps with FtsA. In Cutibacterium acnes (strain DSM 16379 / KPA171202) (Propionibacterium acnes), this protein is Cell division protein SepF.